Consider the following 60-residue polypeptide: Potassium channel toxin alpha-KTx 15.9 (60 aa).

The N-terminal stretch at 1–22 is a signal peptide; it reads MKIFLPVLVMLILCSMCLLTEG. 3 cysteine pairs are disulfide-bonded: C30-C51, C36-C56, and C40-C58.

It belongs to the short scorpion toxin superfamily. Potassium channel inhibitor family. Alpha-KTx 15 subfamily. Expressed by the venom gland.

It localises to the secreted. In terms of biological role, blocker of A-type voltage-gated potassium channels of cerebellar granular cells. May also inhibit Kv4/KCND when coexpressed with DPP6 or DPP10. The occlusion of the outer entry of the K(+) conducting pore is partially reversible and affects both open and closed channels. It shares the same target in rat brain than BmTX3 (AC Q8I0L5) and AmmTX3 (AC P60208). Has been shown to weakly inhibit TRPV1 channels. The chain is Potassium channel toxin alpha-KTx 15.9 from Lychas mucronatus (Chinese swimming scorpion).